The sequence spans 125 residues: MKPSIVTFLMLAAVTAAVSAEDPTMSALKSRVEEIAGQVHGVEDQETTPDLSHCVEPKLCCGSLTTPLDPILDPILLSLGINAAQIVGSVGLLCHPWTEECSSAPQCCTEANLLGGTLALGCSKL.

An N-terminal signal peptide occupies residues 1 to 20 (MKPSIVTFLMLAAVTAAVSA). Intrachain disulfides connect Cys54-Cys107, Cys60-Cys101, Cys61-Cys94, and Cys108-Cys122.

This sequence belongs to the fungal hydrophobin family. In terms of assembly, self-assembles to form functional amyloid fibrils called rodlets. Self-assembly into fibrillar rodlets occurs spontaneously at hydrophobic:hydrophilic interfaces and the rodlets further associate laterally to form amphipathic monolayers.

Its subcellular location is the secreted. It localises to the cell wall. Aerial growth, conidiation, and dispersal of filamentous fungi in the environment rely upon a capability of their secreting small amphipathic proteins called hydrophobins (HPBs) with low sequence identity. Class I can self-assemble into an outermost layer of rodlet bundles on aerial cell surfaces, conferring cellular hydrophobicity that supports fungal growth, development and dispersal; whereas Class II form highly ordered films at water-air interfaces through intermolecular interactions but contribute nothing to the rodlet structure. RodF and rodG belong to Class III, which contains hydrophobins with intermediate (between classes I and II) or atypical characteristics. RodG, unlike rodA, is not required for rodlet formation. This is Class III hydrophobin G from Aspergillus fumigatus (strain ATCC MYA-4609 / CBS 101355 / FGSC A1100 / Af293) (Neosartorya fumigata).